A 465-amino-acid chain; its full sequence is Methylenetetrahydrofolate--tRNA-(uracil-5-)-methyltransferase TrmFO (465 aa).

11–16 (GGGLAG) contacts FAD.

This sequence belongs to the MnmG family. TrmFO subfamily. Requires FAD as cofactor.

Its subcellular location is the cytoplasm. The enzyme catalyses uridine(54) in tRNA + (6R)-5,10-methylene-5,6,7,8-tetrahydrofolate + NADH + H(+) = 5-methyluridine(54) in tRNA + (6S)-5,6,7,8-tetrahydrofolate + NAD(+). It carries out the reaction uridine(54) in tRNA + (6R)-5,10-methylene-5,6,7,8-tetrahydrofolate + NADPH + H(+) = 5-methyluridine(54) in tRNA + (6S)-5,6,7,8-tetrahydrofolate + NADP(+). Catalyzes the folate-dependent formation of 5-methyl-uridine at position 54 (M-5-U54) in all tRNAs. The sequence is that of Methylenetetrahydrofolate--tRNA-(uracil-5-)-methyltransferase TrmFO from Acaryochloris marina (strain MBIC 11017).